The following is a 529-amino-acid chain: Ribonuclease Y (529 aa).

A helical membrane pass occupies residues 4–24 (GLIYISLEVIVACLISALAMY). A KH domain is found at 216 to 297 (FTNRIALPCS…NRIEEVYHRV (82 aa)). In terms of domain architecture, HD spans 342-435 (ALQHSKEVAL…VCAADALSAG (94 aa)).

This sequence belongs to the RNase Y family.

The protein localises to the cell membrane. Its function is as follows. Endoribonuclease that initiates mRNA decay. The polypeptide is Ribonuclease Y (Helicobacter acinonychis (strain Sheeba)).